We begin with the raw amino-acid sequence, 86 residues long: U-myrmeciitoxin(01)-Mg1a (86 aa).

Residues 1–26 (MKLLYLLLTLAIIFVLTIVHAPNVEA) form the signal peptide. Positions 27 to 52 (KALADPESDAVGFADAFGDADAEATG) are excised as a propeptide. Leu-85 carries the leucine amide modification.

It belongs to the formicidae venom precursor-01 superfamily. As to expression, expressed by the venom gland. This toxin is detected along the entire venom gland, as well as in the venom reservoir, the venom duct and in the venom. No toxin are detected in the Dufour's gland.

The protein resides in the secreted. The protein localises to the target cell membrane. Toxin that may interact with target cell membranes, producing a concentration-dependent leak in ion conductance, possibly via multimeric pore formation. It produces an immediate sharp increase of calcium concentration in all DRG neurons. This influx in calcium stabilizes without resulting in any observable dye leakage, showing that the effect is not simply cytolytic. This toxin may be one of the major contributors to the pain associated with envenomation. The toxin also displays a weak cytotoxicity (on HEK cells) and some antimicrobial activity (MIC=2.5 uM on C.neoformans (var. grubii), MIC=10.2 uM on S.aureus), but is not hemolytic to human erythtrocytes. In vivo, intraplantar injection into mice causes spontaneous nocifensive behavior (licking, flinching, or shaking of the paw), which lasts 5-7 minutes (10 and 100 uM tested). Mechanical and heat hypoalgesia are observed at 20 and 25 minutes after injection (highest dose tested of 100 uM). In vivo, injection into crickets (A.domesticus) causes an immediate, dose-dependent, reversible and nonlethal incapacitation that lasts about 53 minutes at the highest dose tested (60 ug/g). In Myrmecia gulosa (Red bulldog ant), this protein is U-myrmeciitoxin(01)-Mg1a.